Consider the following 147-residue polypeptide: MPGGGVTVKDVNQQEFVRALAAFLKKSGKLKVPDWVDIVKLAKHKELAPCDDNWFYIRAASTVRHLYLRGGVGVGSMIKIYGGRKRNGVCPSHFSVGSKNVARKVLQALEALKMVEKDPNGGRRLTPQGTRDLDRIAGQVAAASKKS.

Belongs to the eukaryotic ribosomal protein eS19 family. In terms of assembly, component of the small ribosomal subunit.

It is found in the cytoplasm. The protein resides in the nucleus. Component of the small ribosomal subunit. The ribosome is a large ribonucleoprotein complex responsible for the synthesis of proteins in the cell. Required for pre-rRNA processing and maturation of 40S ribosomal subunits. The polypeptide is Small ribosomal subunit protein eS19 (rps19) (Ictalurus punctatus (Channel catfish)).